A 286-amino-acid polypeptide reads, in one-letter code: Carbohydrate-binding domain-containing protein Cthe_2159 (286 aa).

The signal sequence occupies residues 1-20 (MSIKKLILAASILTTLALTG). C21 is lipidated: N-palmitoyl cysteine. C21 carries S-diacylglycerol cysteine lipidation. Positions 124–225 (GKDNVLTDAE…GIKVENTEEP (102 aa)) are polygalacturonic acid-binding. 9 residues coordinate Ca(2+): R152, D153, D154, N177, D178, D215, D243, D244, and D247.

As to quaternary structure, monomer.

It localises to the cell membrane. In terms of biological role, binds cellulosic and pectic substrates. Displays no enzyme activity (in vitro). The sequence is that of Carbohydrate-binding domain-containing protein Cthe_2159 from Acetivibrio thermocellus (strain ATCC 27405 / DSM 1237 / JCM 9322 / NBRC 103400 / NCIMB 10682 / NRRL B-4536 / VPI 7372) (Clostridium thermocellum).